A 351-amino-acid polypeptide reads, in one-letter code: Peptide chain release factor 1 (351 aa).

N5-methylglutamine is present on Gln-229.

The protein belongs to the prokaryotic/mitochondrial release factor family. Methylated by PrmC. Methylation increases the termination efficiency of RF1.

The protein localises to the cytoplasm. Its function is as follows. Peptide chain release factor 1 directs the termination of translation in response to the peptide chain termination codons UAG and UAA. The chain is Peptide chain release factor 1 from Cereibacter sphaeroides (strain ATCC 17029 / ATH 2.4.9) (Rhodobacter sphaeroides).